The primary structure comprises 440 residues: Acyltransferase Pun1 (440 aa).

Active-site proton acceptor residues include His169 and Asp384.

Belongs to the plant acyltransferase family.

It catalyses the reaction vanillylamine + (6E)-8-methylnon-6-enoyl-CoA = capsaicin + CoA + H(+). The enzyme catalyses (6E)-8-methylnon-6-enoyl-CoA + 4-hydroxy-3-methoxy-benzenemethanol = capsiate + CoA. Involved in the biosynthesis of capsaicinoids and capsinoids natural products, pungent alkaloids synthesized from phenylpropanoid intermediates in the placental tissue of chili pepper fruit acting as repellant on herbivorous mammals and conferring spiciness to hot peppers. Catalyzes the biosynthesis of capsaicin, a pungent component, and of capsiate, a non-pungent component, from vanillylamine and vanillyl alcohol, respectively. Can transfer an acyl from 8-methylnon-6-enoyl-CoA to vanillylamine forming capsaicin and CoA. The chain is Acyltransferase Pun1 from Capsicum frutescens (Cayenne pepper).